The chain runs to 473 residues: Ribulose bisphosphate carboxylase large chain 1 (473 aa).

Substrate contacts are provided by Asn-116 and Thr-166. Lys-168 acts as the Proton acceptor in catalysis. Position 170 (Lys-170) interacts with substrate. Residues Lys-194, Asp-196, and Glu-197 each contribute to the Mg(2+) site. Lys-194 bears the N6-carboxylysine mark. His-287 acts as the Proton acceptor in catalysis. Residues Arg-288, His-320, and Ser-372 each coordinate substrate.

Belongs to the RuBisCO large chain family. Type I subfamily. As to quaternary structure, heterohexadecamer of 8 large chains and 8 small chains. The cofactor is Mg(2+).

It catalyses the reaction 2 (2R)-3-phosphoglycerate + 2 H(+) = D-ribulose 1,5-bisphosphate + CO2 + H2O. The enzyme catalyses D-ribulose 1,5-bisphosphate + O2 = 2-phosphoglycolate + (2R)-3-phosphoglycerate + 2 H(+). Its function is as follows. RuBisCO catalyzes two reactions: the carboxylation of D-ribulose 1,5-bisphosphate, the primary event in carbon dioxide fixation, as well as the oxidative fragmentation of the pentose substrate. Both reactions occur simultaneously and in competition at the same active site. The protein is Ribulose bisphosphate carboxylase large chain 1 of Acidithiobacillus ferrooxidans (strain ATCC 23270 / DSM 14882 / CIP 104768 / NCIMB 8455) (Ferrobacillus ferrooxidans (strain ATCC 23270)).